Reading from the N-terminus, the 258-residue chain is 5'-nucleotidase SurE (258 aa).

Positions 16, 17, 47, and 99 each coordinate a divalent metal cation.

Belongs to the SurE nucleotidase family. Requires a divalent metal cation as cofactor.

The protein resides in the cytoplasm. The catalysed reaction is a ribonucleoside 5'-phosphate + H2O = a ribonucleoside + phosphate. Functionally, nucleotidase that shows phosphatase activity on nucleoside 5'-monophosphates. The polypeptide is 5'-nucleotidase SurE (Coxiella burnetii (strain CbuK_Q154) (Coxiella burnetii (strain Q154))).